Consider the following 309-residue polypeptide: Zinc transporter ZIP2 (309 aa).

The Extracellular segment spans residues 1 to 8 (MEQLLGIK). The chain crosses the membrane as a helical span at residues 9–29 (LGCLFALLALTLGCGLTPICF). The Cytoplasmic segment spans residues 30 to 46 (KWFQIDAARGHHRLVLR). Residues 47–67 (LLGCISAGVFLGAGFMHMTAE) form a helical membrane-spanning segment. The Extracellular segment spans residues 68 to 103 (ALEEIESQIQKFMVQNRSASERNSSGDADSAHMEYP). A helical membrane pass occupies residues 104-124 (YGELIISLGFFFVFFLESLAL). Over 125 to 164 (QCCPGAAGGSTVQDEEWGGAHIFELHSHGHLPSPSKGPLR) the chain is Cytoplasmic. The chain crosses the membrane as a helical span at residues 165–185 (ALVLLLSLSFHSVFEGLAVGL). Residues His-175 and Glu-179 each coordinate Zn(2+). At 186–189 (QPTV) the chain is on the extracellular side. A helical transmembrane segment spans residues 190–210 (AATVQLCLAVLAHKGLVVFGV). A Zn(2+)-binding site is contributed by His-202. The Cytoplasmic portion of the chain corresponds to 211-224 (GMRLVHLGTSSRWA). Residues 225–245 (VFSILLLALMSPLGLAVGLAV) traverse the membrane as a helical segment. The Extracellular segment spans residues 246 to 258 (TGGDSEGGRGLAQ). A helical transmembrane segment spans residues 259 to 279 (AVLEGVAAGTFLYVTFLEILP). Glu-276 is a binding site for Zn(2+). Residues 280 to 288 (RELASPEAP) are Cytoplasmic-facing. The chain crosses the membrane as a helical span at residues 289–309 (LAKWSCVAAGFAFMAFIALWA).

Belongs to the ZIP transporter (TC 2.A.5) family. As to expression, expressed only in prostate and uterine epithelial cells.

Its subcellular location is the cell membrane. It carries out the reaction Zn(2+)(in) = Zn(2+)(out). The enzyme catalyses Cd(2+)(in) = Cd(2+)(out). Its activity is regulated as follows. Activity is increased at acidic pH (6.5). Inhibited in the presence of high extracellular K(+). Functionally, transporter for the divalent cation Zn(2+). Mediates the influx of Zn(2+) into cells from extracellular space. The Zn(2+) uniporter activity is independent of H(+)-driving force, but is modulated by extracellular pH and membrane potential. Also transports other divalent cations Zn(2+), Cd2(+), Cu2(+), Co2(+) in the order of decreasing affinity, respectively. In the skin, aids in the differentiation of keratinocytes in the epidermis. This Homo sapiens (Human) protein is Zinc transporter ZIP2.